The sequence spans 252 residues: MRLTADLINNSLSYLNPLKEREIDLRGHRIPAIENLGVAGPHDAIDFTDNDIQVLGNFPLSPRIRTLLLARNRIAQIQSTLPNATPNLKNLVLASNNIGELADLEVLGRFPRLTHLVLTDNPVTKKENYRYWVLWLCPQVRFLDYVKVKDAERQKAKELFGTADEPTELAKTIKGIKSKTFDVGASSANGAAGSGPSSKLSRLKLTEKEKKKLQDLIKKADSLEEIIRLEKALNEGRLPPGIIAEDDDAMEE.

LRR repeat units lie at residues Pro-41–Pro-62, Arg-63–Ala-84, and Asn-87–Gly-108. The 39-residue stretch at Asn-121–Leu-159 folds into the LRRCT domain.

This sequence belongs to the U2 small nuclear ribonucleoprotein A family. In terms of assembly, associated with the spliceosome.

It localises to the nucleus. In terms of biological role, involved in pre-mRNA splicing. This Neurospora crassa (strain ATCC 24698 / 74-OR23-1A / CBS 708.71 / DSM 1257 / FGSC 987) protein is U2 small nuclear ribonucleoprotein A' (lea-1).